The primary structure comprises 419 residues: Serine hydroxymethyltransferase (419 aa).

(6S)-5,6,7,8-tetrahydrofolate contacts are provided by residues Leu-121 and Gly-125 to Leu-127. N6-(pyridoxal phosphate)lysine is present on Lys-229. A (6S)-5,6,7,8-tetrahydrofolate-binding site is contributed by Ser-354–Phe-356.

It belongs to the SHMT family. Homodimer. Requires pyridoxal 5'-phosphate as cofactor.

The protein localises to the cytoplasm. The catalysed reaction is (6R)-5,10-methylene-5,6,7,8-tetrahydrofolate + glycine + H2O = (6S)-5,6,7,8-tetrahydrofolate + L-serine. Its pathway is one-carbon metabolism; tetrahydrofolate interconversion. The protein operates within amino-acid biosynthesis; glycine biosynthesis; glycine from L-serine: step 1/1. Its function is as follows. Catalyzes the reversible interconversion of serine and glycine with tetrahydrofolate (THF) serving as the one-carbon carrier. This reaction serves as the major source of one-carbon groups required for the biosynthesis of purines, thymidylate, methionine, and other important biomolecules. Also exhibits THF-independent aldolase activity toward beta-hydroxyamino acids, producing glycine and aldehydes, via a retro-aldol mechanism. In Coxiella burnetii (strain RSA 331 / Henzerling II), this protein is Serine hydroxymethyltransferase.